The following is a 443-amino-acid chain: UDP-N-acetylmuramate--L-alanine ligase (443 aa).

110–116 (GAHGKTS) contributes to the ATP binding site.

This sequence belongs to the MurCDEF family.

The protein resides in the cytoplasm. It carries out the reaction UDP-N-acetyl-alpha-D-muramate + L-alanine + ATP = UDP-N-acetyl-alpha-D-muramoyl-L-alanine + ADP + phosphate + H(+). It functions in the pathway cell wall biogenesis; peptidoglycan biosynthesis. Its function is as follows. Cell wall formation. This chain is UDP-N-acetylmuramate--L-alanine ligase, found in Streptococcus gordonii (strain Challis / ATCC 35105 / BCRC 15272 / CH1 / DL1 / V288).